The chain runs to 260 residues: Small ribosomal subunit protein eS1 (260 aa).

The segment covering 1–18 (MAVGKNKRMSKGKKGGKK) has biased composition (basic residues). Positions 1–20 (MAVGKNKRMSKGKKGGKKKA) are disordered.

This sequence belongs to the eukaryotic ribosomal protein eS1 family. As to quaternary structure, component of the small ribosomal subunit. Mature ribosomes consist of a small (40S) and a large (60S) subunit. The 40S subunit contains about 33 different proteins and 1 molecule of RNA (18S). The 60S subunit contains about 49 different proteins and 3 molecules of RNA (25S, 5.8S and 5S).

The protein resides in the cytoplasm. This chain is Small ribosomal subunit protein eS1, found in Ostreococcus lucimarinus (strain CCE9901).